Reading from the N-terminus, the 380-residue chain is Succinyl-diaminopimelate desuccinylase (380 aa).

A Zn(2+)-binding site is contributed by His-66. Asp-68 is a catalytic residue. Asp-99 contacts Zn(2+). Glu-135 acts as the Proton acceptor in catalysis. Positions 136, 164, and 350 each coordinate Zn(2+).

This sequence belongs to the peptidase M20A family. DapE subfamily. In terms of assembly, homodimer. Zn(2+) is required as a cofactor. It depends on Co(2+) as a cofactor.

It carries out the reaction N-succinyl-(2S,6S)-2,6-diaminopimelate + H2O = (2S,6S)-2,6-diaminopimelate + succinate. It participates in amino-acid biosynthesis; L-lysine biosynthesis via DAP pathway; LL-2,6-diaminopimelate from (S)-tetrahydrodipicolinate (succinylase route): step 3/3. Catalyzes the hydrolysis of N-succinyl-L,L-diaminopimelic acid (SDAP), forming succinate and LL-2,6-diaminopimelate (DAP), an intermediate involved in the bacterial biosynthesis of lysine and meso-diaminopimelic acid, an essential component of bacterial cell walls. The polypeptide is Succinyl-diaminopimelate desuccinylase (Magnetococcus marinus (strain ATCC BAA-1437 / JCM 17883 / MC-1)).